The primary structure comprises 204 residues: Protein PAXX (204 aa).

The PISA domain maps to 37–79 (FNLYVTDAAELWSTCFTPDSLAALKARFGLSAAEDITPRFRAA). Phosphoserine is present on Ser134. The disordered stretch occupies residues 143-204 (EETAVSPRKS…PAGGVDFDET (62 aa)). Thr145 carries the phosphothreonine modification. Phosphoserine is present on residues Ser148 and Ser152. The interval 171–204 (GPGPGVRRRCPGESLINPGFKSKKPAGGVDFDET) is mediates interaction with XRCC5/Ku80 and XRCC6/Ku70 and association with the non-homologous end joining core complex. Residues 190–204 (FKSKKPAGGVDFDET) carry the XLM motif.

It belongs to the XRCC4-XLF family. PAXX subfamily. In terms of assembly, homodimer. Interacts with the DNA-bound XRCC5/Ku80 and XRCC6/Ku70 heterodimer (Ku complex); the interaction is direct. Associated component of the non-homologous end joining (NHEJ) complex, composed of the core proteins PRKDC, LIG4, XRCC4, XRCC6/Ku70, XRCC5/Ku86 and NHEJ1/XLF. Interacts with POLL (DNA polymerase lambda); promoting POLL recruitment to double-strand breaks (DSBs) and stimulation of the end-filling activity of POLL. Phosphorylation may inhibit interaction with the DNA-bound XRCC5/Ku80 and XRCC6/Ku70 heterodimer (Ku complex).

The protein resides in the nucleus. The protein localises to the chromosome. Its subcellular location is the cytoplasm. Its function is as follows. Non-essential DNA repair protein involved in DNA non-homologous end joining (NHEJ); participates in double-strand break (DSB) repair and V(D)J recombination. May act as a scaffold required for accumulation of the Ku heterodimer, composed of XRCC5/Ku80 and XRCC6/Ku70, at double-strand break sites and promote the assembly and/or stability of the NHEJ machinery. Involved in NHEJ by promoting the ligation of blunt-ended DNA ends. Together with NHEJ1/XLF, collaborates with DNA polymerase lambda (POLL) to promote joining of non-cohesive DNA ends. Constitutes a non-essential component of classical NHEJ: has a complementary but distinct function with NHEJ1/XLF in DNA repair. Able to restrict infection by herpesvirus 1 (HSV-1) via an unknown mechanism. This chain is Protein PAXX, found in Homo sapiens (Human).